The sequence spans 203 residues: dTTP/UTP pyrophosphatase (203 aa).

Aspartate 70 functions as the Proton acceptor in the catalytic mechanism.

This sequence belongs to the Maf family. YhdE subfamily. A divalent metal cation is required as a cofactor.

It is found in the cytoplasm. The catalysed reaction is dTTP + H2O = dTMP + diphosphate + H(+). The enzyme catalyses UTP + H2O = UMP + diphosphate + H(+). Nucleoside triphosphate pyrophosphatase that hydrolyzes dTTP and UTP. May have a dual role in cell division arrest and in preventing the incorporation of modified nucleotides into cellular nucleic acids. The sequence is that of dTTP/UTP pyrophosphatase (maf-1) from Pseudomonas putida (strain ATCC 47054 / DSM 6125 / CFBP 8728 / NCIMB 11950 / KT2440).